Consider the following 162-residue polypeptide: ATP synthase subunit b (162 aa).

Residues 6 to 28 traverse the membrane as a helical segment; the sequence is LVTFVLTIVNILVLFYLLKRFLF.

This sequence belongs to the ATPase B chain family. F-type ATPases have 2 components, F(1) - the catalytic core - and F(0) - the membrane proton channel. F(1) has five subunits: alpha(3), beta(3), gamma(1), delta(1), epsilon(1). F(0) has three main subunits: a(1), b(2) and c(10-14). The alpha and beta chains form an alternating ring which encloses part of the gamma chain. F(1) is attached to F(0) by a central stalk formed by the gamma and epsilon chains, while a peripheral stalk is formed by the delta and b chains.

It localises to the cell membrane. In terms of biological role, f(1)F(0) ATP synthase produces ATP from ADP in the presence of a proton or sodium gradient. F-type ATPases consist of two structural domains, F(1) containing the extramembraneous catalytic core and F(0) containing the membrane proton channel, linked together by a central stalk and a peripheral stalk. During catalysis, ATP synthesis in the catalytic domain of F(1) is coupled via a rotary mechanism of the central stalk subunits to proton translocation. Functionally, component of the F(0) channel, it forms part of the peripheral stalk, linking F(1) to F(0). The sequence is that of ATP synthase subunit b from Natranaerobius thermophilus (strain ATCC BAA-1301 / DSM 18059 / JW/NM-WN-LF).